The sequence spans 183 residues: Ribosome maturation factor RimM (183 aa).

A PRC barrel domain is found at 103-183; that stretch reads EEGDYYWKDL…SIEVDWDPGF (81 aa).

The protein belongs to the RimM family. As to quaternary structure, binds ribosomal protein uS19.

The protein resides in the cytoplasm. In terms of biological role, an accessory protein needed during the final step in the assembly of 30S ribosomal subunit, possibly for assembly of the head region. Essential for efficient processing of 16S rRNA. May be needed both before and after RbfA during the maturation of 16S rRNA. It has affinity for free ribosomal 30S subunits but not for 70S ribosomes. This chain is Ribosome maturation factor RimM, found in Escherichia coli O157:H7 (strain EC4115 / EHEC).